The chain runs to 233 residues: MLIVLSLGGSILAKNLDPDRFLKYADVLRKLSKKHTLLVVAGGGEAARNYIDTARAVGADEVTCDYIGIEITRLNAHLLAAALGPDACPEIPTNYLEASKAIRPGKVVVMGGVTPGQTTDAVAAILAEFLRADLLAIATSIDGVYSSDPNCDPSAVKYDKISPEKLINIVMAIEMKAGSKSPVDPVAAKIIERCKLDALVMDARDPVQLEEVLDREAAKKSPISCGTWITTKI.

9–10 (GS) provides a ligand contact to ATP. G43 contributes to the UMP binding site. ATP contacts are provided by G44 and R48. UMP contacts are provided by residues D65 and 113–119 (VTPGQTT). ATP-binding residues include T139, Y145, and D148.

Belongs to the UMP kinase family. As to quaternary structure, homohexamer.

The protein localises to the cytoplasm. It carries out the reaction UMP + ATP = UDP + ADP. It participates in pyrimidine metabolism; CTP biosynthesis via de novo pathway; UDP from UMP (UMPK route): step 1/1. Inhibited by UTP. In terms of biological role, catalyzes the reversible phosphorylation of UMP to UDP. The chain is Uridylate kinase from Methanosarcina barkeri (strain Fusaro / DSM 804).